Consider the following 332-residue polypeptide: Phospho-N-acetylmuramoyl-pentapeptide-transferase (332 aa).

Helical transmembrane passes span 3 to 23 (FALM…PRFI), 52 to 72 (MGGT…ATAF), 74 to 94 (LLTG…VVGF), 115 to 135 (LALQ…GAGG), 140 to 160 (VFGH…FWLV), 172 to 192 (IDGL…VIAF), 197 to 217 (FDIL…FVYN), 223 to 243 (IFMG…ISIA), 248 to 268 (WTLL…MLQV), and 311 to 331 (VDFF…AILY).

Belongs to the glycosyltransferase 4 family. MraY subfamily. The cofactor is Mg(2+).

The protein resides in the cell membrane. It carries out the reaction UDP-N-acetyl-alpha-D-muramoyl-L-alanyl-gamma-D-glutamyl-L-lysyl-D-alanyl-D-alanine + di-trans,octa-cis-undecaprenyl phosphate = Mur2Ac(oyl-L-Ala-gamma-D-Glu-L-Lys-D-Ala-D-Ala)-di-trans,octa-cis-undecaprenyl diphosphate + UMP. It participates in cell wall biogenesis; peptidoglycan biosynthesis. In terms of biological role, catalyzes the initial step of the lipid cycle reactions in the biosynthesis of the cell wall peptidoglycan: transfers peptidoglycan precursor phospho-MurNAc-pentapeptide from UDP-MurNAc-pentapeptide onto the lipid carrier undecaprenyl phosphate, yielding undecaprenyl-pyrophosphoryl-MurNAc-pentapeptide, known as lipid I. This is Phospho-N-acetylmuramoyl-pentapeptide-transferase from Streptococcus suis (strain 98HAH33).